The sequence spans 206 residues: Small ribosomal subunit protein uS4 (206 aa).

In terms of domain architecture, S4 RNA-binding spans 98-161 (RRLDNVVYRL…RSMELIKNNL (64 aa)).

The protein belongs to the universal ribosomal protein uS4 family. Part of the 30S ribosomal subunit. Contacts protein S5. The interaction surface between S4 and S5 is involved in control of translational fidelity.

In terms of biological role, one of the primary rRNA binding proteins, it binds directly to 16S rRNA where it nucleates assembly of the body of the 30S subunit. With S5 and S12 plays an important role in translational accuracy. The chain is Small ribosomal subunit protein uS4 from Caldanaerobacter subterraneus subsp. tengcongensis (strain DSM 15242 / JCM 11007 / NBRC 100824 / MB4) (Thermoanaerobacter tengcongensis).